The following is a 564-amino-acid chain: Potassium-transporting ATPase potassium-binding subunit (564 aa).

The next 10 helical transmembrane spans lie at 7–27 (LLILAFLVLLLAPAPWLGRFF), 67–87 (AWALLAFNLAGFVVLFAMLML), 135–155 (VGLTVQNFVSAATGLAVLVAL), 179–199 (LYALLPISIVLAVFLVWQGVP), 258–278 (FELVSILLIPAALVFTFGHYV), 286–306 (AILGCMLALLLIGGAVSLWAE), 382–402 (VGLNGMVLNVLIAVFLAGLMI), 420–440 (LLVATLLVMPVGVLVLGAIAA), 487–507 (LMLSLAIFIGRFGYILPVLAL), and 528–548 (GLLFVTLLTVTILLVGGLTFL).

The protein belongs to the KdpA family. As to quaternary structure, the system is composed of three essential subunits: KdpA, KdpB and KdpC.

It localises to the cell inner membrane. Functionally, part of the high-affinity ATP-driven potassium transport (or Kdp) system, which catalyzes the hydrolysis of ATP coupled with the electrogenic transport of potassium into the cytoplasm. This subunit binds the periplasmic potassium ions and delivers the ions to the membrane domain of KdpB through an intramembrane tunnel. In Pseudomonas syringae pv. tomato (strain ATCC BAA-871 / DC3000), this protein is Potassium-transporting ATPase potassium-binding subunit.